We begin with the raw amino-acid sequence, 584 residues long: uncharacterized protein (584 aa).

3 disordered regions span residues Leu-123–Pro-156, Lys-209–Gly-264, and Ser-355–Thr-479. Low complexity-rich tracts occupy residues Ser-237 to Ser-260 and Ser-366 to Thr-376. Polar residues-rich tracts occupy residues Pro-377 to Thr-388 and Asp-395 to Pro-419. The segment covering Met-425–Thr-479 has biased composition (low complexity).

This is an uncharacterized protein from Dictyostelium discoideum (Social amoeba).